A 106-amino-acid polypeptide reads, in one-letter code: 3-phenylpropionate/cinnamic acid dioxygenase ferredoxin subunit (106 aa).

Residues 4–99 form the Rieske domain; the sequence is IYACPVADVP…VHVEGSDIFI (96 aa). 4 residues coordinate [2Fe-2S] cluster: Cys-42, His-44, Cys-62, and His-65.

The protein belongs to the bacterial ring-hydroxylating dioxygenase ferredoxin component family. In terms of assembly, this dioxygenase system consists of four proteins: the two subunits of the hydroxylase component (HcaE and HcaF), a ferredoxin (HcaC) and a ferredoxin reductase (HcaD). It depends on [2Fe-2S] cluster as a cofactor.

It participates in aromatic compound metabolism; 3-phenylpropanoate degradation. Part of the multicomponent 3-phenylpropionate dioxygenase, that converts 3-phenylpropionic acid (PP) and cinnamic acid (CI) into 3-phenylpropionate-dihydrodiol (PP-dihydrodiol) and cinnamic acid-dihydrodiol (CI-dihydrodiol), respectively. This protein seems to be a 2Fe-2S ferredoxin. This is 3-phenylpropionate/cinnamic acid dioxygenase ferredoxin subunit from Shigella boydii serotype 4 (strain Sb227).